Reading from the N-terminus, the 299-residue chain is ATP phosphoribosyltransferase (299 aa).

Belongs to the ATP phosphoribosyltransferase family. Long subfamily. Requires Mg(2+) as cofactor.

The protein localises to the cytoplasm. The catalysed reaction is 1-(5-phospho-beta-D-ribosyl)-ATP + diphosphate = 5-phospho-alpha-D-ribose 1-diphosphate + ATP. The protein operates within amino-acid biosynthesis; L-histidine biosynthesis; L-histidine from 5-phospho-alpha-D-ribose 1-diphosphate: step 1/9. With respect to regulation, feedback inhibited by histidine. Its function is as follows. Catalyzes the condensation of ATP and 5-phosphoribose 1-diphosphate to form N'-(5'-phosphoribosyl)-ATP (PR-ATP). Has a crucial role in the pathway because the rate of histidine biosynthesis seems to be controlled primarily by regulation of HisG enzymatic activity. This is ATP phosphoribosyltransferase (hisG) from Pasteurella multocida (strain Pm70).